A 420-amino-acid chain; its full sequence is Nucleobindin-2 (420 aa).

Residues 1 to 24 (MRWRIIQVQYCFLLVPCMLTALEA) form the signal peptide. The DNA-binding element occupies 171-223 (RTRHEEFKKYEMMKEHERREYLKTLSEEKRKEEESKFEEMKRKHEDHPKVNHP). Residues 193-225 (KTLSEEKRKEEESKFEEMKRKHEDHPKVNHPGS) are disordered. Residues 213–420 (KHEDHPKVNH…AGELKFEPHT (208 aa)) form a binds to necdin region. EF-hand domains follow at residues 241–276 (PNDFDPKTFFKLHDVNNDGFLDEQELEALFTRELEK) and 293–328 (ERLRMREHVMSEIDNNKDRLVTLEEFLRATEKKEFL). The Ca(2+) site is built by aspartate 254, asparagine 256, aspartate 258, glutamate 265, aspartate 306, asparagine 308, aspartate 310, and glutamate 317. The GBA motif lies at 304–334 (EIDNNKDRLVTLEEFLRATEKKEFLEPDSWE). Phosphoserine is present on serine 332. The span at 365–389 (AEELQKQKEDLQRQHDHLEAQKQEY) shows a compositional bias: basic and acidic residues. A disordered region spans residues 365-420 (AEELQKQKEDLQRQHDHLEAQKQEYHQAVQHLEQKKLQQGIAPSGPAGELKFEPHT).

It belongs to the nucleobindin family. In terms of assembly, interacts (via GBA motif) with guanine nucleotide-binding protein G(i) alpha subunit GNAI3. Preferentially interacts with inactive rather than active GNAI3. Interaction with GNAI3 is inhibited when NUCB2 binds calcium, probably due to a conformational change which renders the GBA motif inaccessible. Binds to the postmitotic growth suppressor NDN; coexpression abolishes NUCB2 secretion. Interacts with MC4R. Found in liver, heart, thymus, muscle, intestine, kidney, lung, spleen and throughout the brain, in cerebral cortex, hippocampus, hypothalamus and medulla oblongata. Nucb2 and necdin levels were higher in postmitotic neurons.

The protein resides in the cytoplasm. The protein localises to the perikaryon. It is found in the endoplasmic reticulum. Its subcellular location is the golgi apparatus. It localises to the nucleus envelope. The protein resides in the membrane. The protein localises to the secreted. Its function is as follows. Calcium-binding protein which may have a role in calcium homeostasis. Acts as a non-receptor guanine nucleotide exchange factor which binds to and activates guanine nucleotide-binding protein (G-protein) alpha subunit GNAI3. Anorexigenic peptide, seems to play an important role in hypothalamic pathways regulating food intake and energy homeostasis, acting in a leptin-independent manner. May also exert hypertensive roles and modulate blood pressure through directly acting on peripheral arterial resistance. In intestinal epithelial cells, plays a role in the inhibition of hepatic glucose production via MC4R receptor leading to increased cyclic adenosine monophosphate (cAMP) levels and glucagon-like peptide 1 (GLP-1) secretion. This Mus musculus (Mouse) protein is Nucleobindin-2 (Nucb2).